The sequence spans 436 residues: Putative F-box/FBD/LRR-repeat protein At5g44960 (436 aa).

Residues 4–50 (CDYINELPDSLLTQILLDLRTKDSVKTSVSSKRWRNLWLNVPGLDLF) form the F-box domain. 2 LRR repeats span residues 287–310 (ISSV…SKLG) and 397–420 (SAVL…SYKK). The region spanning 355–407 (EENIDFHEVPQCLISTLEYVHINKLMMMEQSGIKLVNYFIENSAVLKKLTLRF) is the FBD domain.

This is Putative F-box/FBD/LRR-repeat protein At5g44960 from Arabidopsis thaliana (Mouse-ear cress).